Here is a 553-residue protein sequence, read N- to C-terminus: Glutamate--tRNA ligase (553 aa).

The 'HIGH' region motif lies at Pro103–His113.

Belongs to the class-I aminoacyl-tRNA synthetase family. Glutamate--tRNA ligase type 2 subfamily.

The protein localises to the cytoplasm. The enzyme catalyses tRNA(Glu) + L-glutamate + ATP = L-glutamyl-tRNA(Glu) + AMP + diphosphate. Functionally, catalyzes the attachment of glutamate to tRNA(Glu) in a two-step reaction: glutamate is first activated by ATP to form Glu-AMP and then transferred to the acceptor end of tRNA(Glu). The chain is Glutamate--tRNA ligase from Methanothermobacter thermautotrophicus (strain ATCC 29096 / DSM 1053 / JCM 10044 / NBRC 100330 / Delta H) (Methanobacterium thermoautotrophicum).